The primary structure comprises 1001 residues: Integrator complex subunit 7 (1001 aa).

Residues 980-1001 (DPSKQGAPAPSTSQAVGQTRRF) are disordered. Positions 989-1001 (PSTSQAVGQTRRF) are enriched in polar residues.

This sequence belongs to the Integrator subunit 7 family. In terms of assembly, belongs to the multiprotein complex Integrator, at least composed of IntS1, IntS2, IntS3, IntS4, omd/IntS5, IntS6, defl/IntS7, IntS8, IntS9, IntS10, IntS11, IntS12, asun/IntS13, IntS14 and IntS15. The core complex associates with protein phosphatase 2A subunits mts/PP2A and Pp2A-29B, to form the Integrator-PP2A (INTAC) complex.

The protein resides in the nucleus. It localises to the cytoplasm. Its function is as follows. Component of the integrator complex, a multiprotein complex that terminates RNA polymerase II (Pol II) transcription in the promoter-proximal region of genes. The integrator complex provides a quality checkpoint during transcription elongation by driving premature transcription termination of transcripts that are unfavorably configured for transcriptional elongation: the complex terminates transcription by (1) catalyzing dephosphorylation of the C-terminal domain (CTD) of Pol II subunit Polr2A/Rbp1 and Spt5, and (2) degrading the exiting nascent RNA transcript via endonuclease activity. The integrator complex is also involved in the 3'-end processing of the U7 snRNA, and also the spliceosomal snRNAs U1, U2, U4 and U5. In Drosophila melanogaster (Fruit fly), this protein is Integrator complex subunit 7.